The primary structure comprises 64 residues: Outer envelope membrane protein 7 (64 aa).

The Chloroplast intermembrane portion of the chain corresponds to 1-11; that stretch reads MGKTSGAKQAT. Residues 12-32 traverse the membrane as a helical segment; the sequence is VVVAAMALGWLAIEIAFKPFL. The AKR2A-binding sequence (ABS) required for chloroplast outer envelope membrane targeting motif lies at 29-35; that stretch reads KPFLDKF. Topologically, residues 33–64 are cytoplasmic; it reads DKFRSSIDKSDPTKDPDDFDTAATATTSKEGL. Residues 39–48 show a composition bias toward basic and acidic residues; it reads IDKSDPTKDP. Residues 39–64 are disordered; sequence IDKSDPTKDPDDFDTAATATTSKEGL. Over residues 53-64 the composition is skewed to low complexity; it reads TAATATTSKEGL.

Interacts with AKR2A. As to expression, confined to green tissues.

The protein resides in the plastid. It is found in the chloroplast outer membrane. This chain is Outer envelope membrane protein 7, found in Arabidopsis thaliana (Mouse-ear cress).